Consider the following 443-residue polypeptide: ATP-dependent protease ATPase subunit HslU (443 aa).

ATP is bound by residues Ile-20, 62 to 67 (GVGKTE), Asp-255, Glu-321, and Arg-393.

It belongs to the ClpX chaperone family. HslU subfamily. As to quaternary structure, a double ring-shaped homohexamer of HslV is capped on each side by a ring-shaped HslU homohexamer. The assembly of the HslU/HslV complex is dependent on binding of ATP.

Its subcellular location is the cytoplasm. In terms of biological role, ATPase subunit of a proteasome-like degradation complex; this subunit has chaperone activity. The binding of ATP and its subsequent hydrolysis by HslU are essential for unfolding of protein substrates subsequently hydrolyzed by HslV. HslU recognizes the N-terminal part of its protein substrates and unfolds these before they are guided to HslV for hydrolysis. This Helicobacter pylori (strain Shi470) protein is ATP-dependent protease ATPase subunit HslU.